The following is a 743-amino-acid chain: 1,4-alpha-glucan branching enzyme GlgB (743 aa).

Asp416 serves as the catalytic Nucleophile. Glu469 (proton donor) is an active-site residue.

It belongs to the glycosyl hydrolase 13 family. GlgB subfamily. Monomer.

It catalyses the reaction Transfers a segment of a (1-&gt;4)-alpha-D-glucan chain to a primary hydroxy group in a similar glucan chain.. The protein operates within glycan biosynthesis; glycogen biosynthesis. Its function is as follows. Catalyzes the formation of the alpha-1,6-glucosidic linkages in glycogen by scission of a 1,4-alpha-linked oligosaccharide from growing alpha-1,4-glucan chains and the subsequent attachment of the oligosaccharide to the alpha-1,6 position. In Shewanella baltica (strain OS155 / ATCC BAA-1091), this protein is 1,4-alpha-glucan branching enzyme GlgB.